The following is a 369-amino-acid chain: S-adenosylmethionine decarboxylase proenzyme 2 (369 aa).

Catalysis depends on residues Glu9 and Glu12. Catalysis depends on Ser69, which acts as the Schiff-base intermediate with substrate; via pyruvic acid. Position 69 is a pyruvic acid (Ser); by autocatalysis (Ser69). The active-site Proton donor; for catalytic activity is Cys83. Catalysis depends on proton acceptor; for processing activity residues Ser236 and His249.

It belongs to the eukaryotic AdoMetDC family. Requires pyruvate as cofactor. Is synthesized initially as an inactive proenzyme. Formation of the active enzyme involves a self-maturation process in which the active site pyruvoyl group is generated from an internal serine residue via an autocatalytic post-translational modification. Two non-identical subunits are generated from the proenzyme in this reaction, and the pyruvate is formed at the N-terminus of the alpha chain, which is derived from the carboxyl end of the proenzyme. The post-translation cleavage follows an unusual pathway, termed non-hydrolytic serinolysis, in which the side chain hydroxyl group of the serine supplies its oxygen atom to form the C-terminus of the beta chain, while the remainder of the serine residue undergoes an oxidative deamination to produce ammonia and the pyruvoyl group blocking the N-terminus of the alpha chain.

The enzyme catalyses S-adenosyl-L-methionine + H(+) = S-adenosyl 3-(methylsulfanyl)propylamine + CO2. Its pathway is amine and polyamine biosynthesis; S-adenosylmethioninamine biosynthesis; S-adenosylmethioninamine from S-adenosyl-L-methionine: step 1/1. The protein is S-adenosylmethionine decarboxylase proenzyme 2 (SAMDC2) of Brassica juncea (Indian mustard).